The chain runs to 193 residues: Fe/S biogenesis protein NfuA (193 aa).

[4Fe-4S] cluster contacts are provided by cysteine 150 and cysteine 153.

Belongs to the NfuA family. Homodimer. It depends on [4Fe-4S] cluster as a cofactor.

Involved in iron-sulfur cluster biogenesis. Binds a 4Fe-4S cluster, can transfer this cluster to apoproteins, and thereby intervenes in the maturation of Fe/S proteins. Could also act as a scaffold/chaperone for damaged Fe/S proteins. This Histophilus somni (strain 129Pt) (Haemophilus somnus) protein is Fe/S biogenesis protein NfuA.